An 83-amino-acid chain; its full sequence is DNA-directed RNA polymerase subunit Rpo5 (83 aa).

This sequence belongs to the archaeal Rpo5/eukaryotic RPB5 RNA polymerase subunit family. In terms of assembly, part of the RNA polymerase complex.

The protein resides in the cytoplasm. The enzyme catalyses RNA(n) + a ribonucleoside 5'-triphosphate = RNA(n+1) + diphosphate. Its function is as follows. DNA-dependent RNA polymerase (RNAP) catalyzes the transcription of DNA into RNA using the four ribonucleoside triphosphates as substrates. In Nitrosopumilus maritimus (strain SCM1), this protein is DNA-directed RNA polymerase subunit Rpo5.